Here is a 321-residue protein sequence, read N- to C-terminus: Methionyl-tRNA formyltransferase (321 aa).

A (6S)-5,6,7,8-tetrahydrofolate-binding site is contributed by 112 to 115 (GLLP).

The protein belongs to the Fmt family.

It catalyses the reaction L-methionyl-tRNA(fMet) + (6R)-10-formyltetrahydrofolate = N-formyl-L-methionyl-tRNA(fMet) + (6S)-5,6,7,8-tetrahydrofolate + H(+). In terms of biological role, attaches a formyl group to the free amino group of methionyl-tRNA(fMet). The formyl group appears to play a dual role in the initiator identity of N-formylmethionyl-tRNA by promoting its recognition by IF2 and preventing the misappropriation of this tRNA by the elongation apparatus. The sequence is that of Methionyl-tRNA formyltransferase from Chlamydia caviae (strain ATCC VR-813 / DSM 19441 / 03DC25 / GPIC) (Chlamydophila caviae).